Consider the following 171-residue polypeptide: MTAFRSGLIALLATLALDQASKLWLYFGTDLVMTQPWRLAPFADFVVVWNRGVSYGLFQQEGGLGRWLLVAVSLAAVIGLSVWMRRAGSRLLAVALGLIVGGALGNAIDRAAYGAVFDFVHLHAGPWSWYVFNVADAAIVAGVVGLILDSLRPAPRAPSTDVAGNGGHPQA.

A run of 3 helical transmembrane segments spans residues G7–F27, L64–M84, and G88–I108. Catalysis depends on residues D118 and D136. Residues S128–L148 form a helical membrane-spanning segment.

This sequence belongs to the peptidase A8 family.

Its subcellular location is the cell inner membrane. It carries out the reaction Release of signal peptides from bacterial membrane prolipoproteins. Hydrolyzes -Xaa-Yaa-Zaa-|-(S,diacylglyceryl)Cys-, in which Xaa is hydrophobic (preferably Leu), and Yaa (Ala or Ser) and Zaa (Gly or Ala) have small, neutral side chains.. It participates in protein modification; lipoprotein biosynthesis (signal peptide cleavage). Its function is as follows. This protein specifically catalyzes the removal of signal peptides from prolipoproteins. The sequence is that of Lipoprotein signal peptidase from Methylorubrum extorquens (strain PA1) (Methylobacterium extorquens).